Reading from the N-terminus, the 417-residue chain is 3-oxo-isoapionate-4-phosphate decarboxylase (417 aa).

Positions 177, 179, and 180 each coordinate Mg(2+). Lys177 is modified (N6-carboxylysine).

This sequence belongs to the RuBisCO large chain family. It depends on Mg(2+) as a cofactor.

It carries out the reaction 3-oxoisoapionate 4-phosphate + H(+) = L-erythrulose 1-phosphate + CO2. Its pathway is carbohydrate metabolism. Functionally, involved in catabolism of D-apiose. Catalyzes the decarboxylation of 3-oxo-isoapionate 4-phosphate to L-erythrulose 1-phosphate. The sequence is that of 3-oxo-isoapionate-4-phosphate decarboxylase from Rhizobium etli (strain ATCC 51251 / DSM 11541 / JCM 21823 / NBRC 15573 / CFN 42).